The sequence spans 281 residues: uncharacterized protein (281 aa).

This is an uncharacterized protein from Haloarcula marismortui (strain ATCC 43049 / DSM 3752 / JCM 8966 / VKM B-1809) (Halobacterium marismortui).